The following is a 217-amino-acid chain: Ribose-5-phosphate isomerase A (217 aa).

Residues 28-31, 81-84, and 94-97 each bind substrate; these read TGST, DGAD, and KGGG. Glutamate 103 (proton acceptor) is an active-site residue. Substrate is bound at residue lysine 121.

The protein belongs to the ribose 5-phosphate isomerase family. Homodimer.

The catalysed reaction is aldehydo-D-ribose 5-phosphate = D-ribulose 5-phosphate. Its pathway is carbohydrate degradation; pentose phosphate pathway; D-ribose 5-phosphate from D-ribulose 5-phosphate (non-oxidative stage): step 1/1. In terms of biological role, catalyzes the reversible conversion of ribose-5-phosphate to ribulose 5-phosphate. The chain is Ribose-5-phosphate isomerase A from Aeromonas salmonicida (strain A449).